Reading from the N-terminus, the 146-residue chain is Large ribosomal subunit protein uL15 (146 aa).

A compositionally biased stretch (basic and acidic residues) spans 1–13 (MKLHELKPAEGSR). Residues 1–52 (MKLHELKPAEGSRKVRNRVGRGIGSGNGKTAGKGHKGQNARSGGGVRLGFEG) are disordered. 2 stretches are compositionally biased toward gly residues: residues 21 to 31 (RGIGSGNGKTA) and 42 to 52 (SGGGVRLGFEG).

Belongs to the universal ribosomal protein uL15 family. In terms of assembly, part of the 50S ribosomal subunit.

Its function is as follows. Binds to the 23S rRNA. In Bacillus cereus (strain B4264), this protein is Large ribosomal subunit protein uL15.